Consider the following 415-residue polypeptide: MKGSYKSRWVIVIVVVIAAIAAFWFWQGRNDSRSAAPGATKQAQQSPAGGRRGMRSGPLAPVQAATAVEQAVPRYLTGLGTITAANTVTVRSRVDGQLMALHFQEGQQVKAGDLLAEIDPSQFKVALAQALGQLAKDKATLANARRDLARYQQLVKTNLVSRQELDAQQALVSETEGTIKADEASVASAQLQLDWSRITAPVDGRVGLKQVDVGNQISSGDTTGIVVITQTHPIDLVFTLPESDIATVVQAQKAGKPLVVEAWDRTNSKKLSEGTLLSLDNQIDATTGTIKVKARFNNQDDALFPNQFVNARMLVDTEQNAVVIPTAALQMGNEGHFVWVLNSENKVSKHLVTPGIQDSQRVVIRAGISAGDRVVTDGIDRLTEGAKVEVVEAQSATTSEEKATSREYAKKGARS.

Residues 1–21 (MKGSYKSRWVIVIVVVIAAIA) form the signal peptide. Disordered stretches follow at residues 32 to 59 (SRSA…SGPL) and 392 to 415 (EAQS…GARS). The span at 399-415 (SEEKATSREYAKKGARS) shows a compositional bias: basic and acidic residues.

This sequence belongs to the membrane fusion protein (MFP) (TC 8.A.1) family. As to quaternary structure, part of a tripartite efflux system composed of MdtA, MdtB and MdtC.

The protein localises to the cell inner membrane. The MdtABC tripartite complex confers resistance against novobiocin and deoxycholate. This Escherichia coli (strain SMS-3-5 / SECEC) protein is Multidrug resistance protein MdtA.